Here is a 66-residue protein sequence, read N- to C-terminus: Sodium/potassium-transporting ATPase subunit gamma (66 aa).

Residues 29–46 (GGLIFAGLAFIVGLLILL) traverse the membrane as a helical segment.

The protein belongs to the FXYD family. As to quaternary structure, regulatory subunit of the sodium/potassium-transporting ATPase which is composed of a catalytic alpha subunit, an auxiliary non-catalytic beta subunit and an additional regulatory subunit. Expressed in the distal convoluted tubule in the kidney. Found on basolateral membranes of nephron epithelial cells.

It is found in the membrane. Functionally, may be involved in forming the receptor site for cardiac glycoside binding or may modulate the transport function of the sodium ATPase. The protein is Sodium/potassium-transporting ATPase subunit gamma (FXYD2) of Homo sapiens (Human).